The chain runs to 235 residues: Transcriptional regulatory protein MalR (235 aa).

The Response regulatory domain occupies Asn3–Arg119. A 4-aspartylphosphate modification is found at Asp54. Positions Thr178–Lys197 form a DNA-binding region, H-T-H motif.

In terms of processing, phosphorylated and activated by MalK.

Its subcellular location is the cytoplasm. Its function is as follows. Member of a two-component regulatory system MalK/MalR. Activates transcription of maeA, maeN and yflS in presence of malate by binding to their promoter region. This is Transcriptional regulatory protein MalR (malR) from Bacillus subtilis (strain 168).